The following is a 246-amino-acid chain: MLQNIRIVLVETSHTGNMGSVARAMKTMGLTNLWLVNPLVKPDSQAIALAAGASDVIGNAHIVDTLDEALAGCSLVVGTSARSRTLPWPMLDPRECGLKSVAEAANTPVALVFGRERVGLTNEELQKCHYHVAIAANPEYSSLNLAMAVQVIAYEVRMAWLATQENGEQVEHEETPYPLVDDLERFYGHLEQTLLATGFIRENHPGQVMNKLRRLFTRARPESQELNILRGILASIEQQNKGNKAE.

Residues 79–81, G114, I134, and 141–143 contribute to the S-adenosyl-L-methionine site; these read TSA and SSL.

It belongs to the class IV-like SAM-binding methyltransferase superfamily. RNA methyltransferase TrmH family. As to quaternary structure, homodimer.

It is found in the cytoplasm. It carries out the reaction cytidine(32) in tRNA + S-adenosyl-L-methionine = 2'-O-methylcytidine(32) in tRNA + S-adenosyl-L-homocysteine + H(+). The enzyme catalyses uridine(32) in tRNA + S-adenosyl-L-methionine = 2'-O-methyluridine(32) in tRNA + S-adenosyl-L-homocysteine + H(+). In terms of biological role, catalyzes the formation of 2'O-methylated cytidine (Cm32) or 2'O-methylated uridine (Um32) at position 32 in tRNA. This Escherichia coli O1:K1 / APEC protein is tRNA (cytidine/uridine-2'-O-)-methyltransferase TrmJ (trmJ).